A 430-amino-acid chain; its full sequence is UDP-N-acetylmuramoylalanine--D-glutamate ligase (430 aa).

105 to 111 (GSNGKTT) contacts ATP.

The protein belongs to the MurCDEF family.

Its subcellular location is the cytoplasm. The catalysed reaction is UDP-N-acetyl-alpha-D-muramoyl-L-alanine + D-glutamate + ATP = UDP-N-acetyl-alpha-D-muramoyl-L-alanyl-D-glutamate + ADP + phosphate + H(+). It participates in cell wall biogenesis; peptidoglycan biosynthesis. Its function is as follows. Cell wall formation. Catalyzes the addition of glutamate to the nucleotide precursor UDP-N-acetylmuramoyl-L-alanine (UMA). In Pseudothermotoga lettingae (strain ATCC BAA-301 / DSM 14385 / NBRC 107922 / TMO) (Thermotoga lettingae), this protein is UDP-N-acetylmuramoylalanine--D-glutamate ligase.